The primary structure comprises 1310 residues: Angiotensin-converting enzyme (1310 aa).

The first 33 residues, 1–33, serve as a signal peptide directing secretion; sequence MGAAPGRRGPRLLRPPPPLLLLLLLLRPPPAAL. Residues 34–1260 are Extracellular-facing; that stretch reads TLDPGLLPGD…GMNLDAQQAR (1227 aa). 2 Peptidase M2 domains span residues 45–628 and 647–1226; these read AADE…LGWP and VTDE…LGWP. N-linked (GlcNAc...) asparagine glycans are attached at residues asparagine 59, asparagine 79, and asparagine 151. Cysteine 162 and cysteine 170 are oxidised to a cystine. Residue tyrosine 236 participates in chloride binding. The N-linked (GlcNAc...) asparagine glycan is linked to asparagine 323. A disulfide bond links cysteine 364 and cysteine 382. Zn(2+) is bound at residue histidine 395. Residue glutamate 396 is the Proton acceptor 1 of the active site. The Zn(2+) site is built by histidine 399 and glutamate 422. N-linked (GlcNAc...) asparagine glycans are attached at residues asparagine 449 and asparagine 513. The Proton donor 1 role is filled by histidine 524. Chloride is bound at residue arginine 533. A disulfide bond links cysteine 549 and cysteine 561. N-linked (GlcNAc...) asparagine glycosylation is found at asparagine 681, asparagine 699, and asparagine 718. A disulfide bond links cysteine 761 and cysteine 767. Chloride contacts are provided by arginine 795 and tyrosine 833. N-linked (GlcNAc...) asparagine glycosylation occurs at asparagine 946. Cysteines 961 and 979 form a disulfide. Histidine 992 contacts Zn(2+). Glutamate 993 serves as the catalytic Proton acceptor 2. Residues histidine 996 and glutamate 1020 each contribute to the Zn(2+) site. 2 residues coordinate chloride: tryptophan 1094 and arginine 1098. Residue histidine 1122 is the Proton donor 2 of the active site. Arginine 1131 serves as a coordination point for chloride. A disulfide bond links cysteine 1147 and cysteine 1159. The N-linked (GlcNAc...) asparagine glycan is linked to asparagine 1195. A juxtamembrane stalk region spans residues 1219-1260; the sequence is HGEKLGWPQYTWTPNSARSEGSLPDSGRVNFLGMNLDAQQAR. A helical transmembrane segment spans residues 1261-1281; sequence VGQWVLLFLGVALLLASLGLT. Topologically, residues 1282–1310 are cytoplasmic; the sequence is QRLFSIRYQSLRQPHHGPQFGSEVELRHS. Residue serine 1303 is modified to Phosphoserine.

It belongs to the peptidase M2 family. Monomer and homodimer; homodimerizes following binding to an inhibitor. Interacts with calmodulin (CALM1, CALM2 or CALM3); interaction takes place in the cytoplasmic region and regulates phosphorylation and proteolytic cleavage. It depends on Zn(2+) as a cofactor. The cofactor is chloride. Post-translationally, N-glycosylated. In terms of processing, phosphorylated by CK2 on Ser-1303; which allows membrane retention. Phosphorylated on tyrosine residues on its extracellular part, promoting cleavage by secretase enzymes and formation of the soluble form (Angiotensin-converting enzyme, soluble form). Produced following proteolytic cleavage by secretase enzymes that cleave the transmembrane form in the juxtamembrane stalk region upstream of the transmembrane region. Cleavage can take place at different sites of the juxtamembrane stalk region. Testis-specific isoform is expressed in spermatocytes, adult testis.

It is found in the cell membrane. Its subcellular location is the cytoplasm. The protein resides in the secreted. The catalysed reaction is Release of a C-terminal dipeptide, oligopeptide-|-Xaa-Yaa, when Xaa is not Pro, and Yaa is neither Asp nor Glu. Thus, conversion of angiotensin I to angiotensin II, with increase in vasoconstrictor activity, but no action on angiotensin II.. It carries out the reaction angiotensin I + H2O = L-histidyl-L-leucine + angiotensin II. The enzyme catalyses bradykinin + H2O = L-Phe-L-Arg + bradykinin(1-7). It catalyses the reaction substance P + H2O = substance P(1-9) + L-Leu-L-Met-NH2. The catalysed reaction is substance P + H2O = substance P(1-8) + Gly-L-Leu-L-Met-NH2. It carries out the reaction substance P + H2O = L-Phe-L-Phe-Gly-L-Leu-L-Met-NH2 + substance P(1-6). The enzyme catalyses neurotensin + H2O = neurotensin(1-11) + L-isoleucyl-L-leucine. It catalyses the reaction goralatide + H2O = N-acetyl-L-seryl-L-aspartate + L-lysyl-L-proline. The catalysed reaction is Met-enkephalin + H2O = L-phenylalanyl-L-methionine + L-tyrosylglycylglycine. It carries out the reaction Leu-enkephalin + H2O = L-tyrosylglycylglycine + L-phenylalanyl-L-leucine. The enzyme catalyses Met-enkephalin-Arg-Phe + H2O = L-arginyl-L-phenylalanine + Met-enkephalin. The dipeptidyl carboxypeptidase activity is strongly activated by chloride. Specifically inhibited by lisinopril. Inhibited by mixanpril, an orally-active drug used for the treatment of hypertension. Its activity is regulated as follows. Strongly inhibited by lisinopril and captopril. In terms of biological role, dipeptidyl carboxypeptidase that removes dipeptides from the C-terminus of a variety of circulating hormones, such as angiotensin I, bradykinin or enkephalins, thereby playing a key role in the regulation of blood pressure, electrolyte homeostasis or synaptic plasticity. Composed of two similar catalytic domains, each possessing a functional active site, with different selectivity for substrates. Plays a major role in the angiotensin-renin system that regulates blood pressure and sodium retention by the kidney by converting angiotensin I to angiotensin II, resulting in an increase of the vasoconstrictor activity of angiotensin. Also able to inactivate bradykinin, a potent vasodilator, and therefore enhance the blood pressure response. Acts as a regulator of synaptic transmission by mediating cleavage of neuropeptide hormones, such as substance P, neurotensin or enkephalins. Catalyzes degradation of different enkephalin neuropeptides (Met-enkephalin, Leu-enkephalin, Met-enkephalin-Arg-Phe and possibly Met-enkephalin-Arg-Gly-Leu). Acts as a regulator of synaptic plasticity in the nucleus accumbens of the brain by mediating cleavage of Met-enkephalin-Arg-Phe, a strong ligand of Mu-type opioid receptor OPRM1, into Met-enkephalin. Met-enkephalin-Arg-Phe cleavage by ACE decreases activation of OPRM1, leading to long-term synaptic potentiation of glutamate release. Also acts as a regulator of hematopoietic stem cell differentiation by mediating degradation of hemoregulatory peptide N-acetyl-SDKP (AcSDKP). Acts as a regulator of cannabinoid signaling pathway by mediating degradation of hemopressin, an antagonist peptide of the cannabinoid receptor CNR1. Involved in amyloid-beta metabolism by catalyzing degradation of Amyloid-beta protein 40 and Amyloid-beta protein 42 peptides, thereby preventing plaque formation. Catalyzes cleavage of cholecystokinin (maturation of Cholecystokinin-8 and Cholecystokinin-5) and Gonadoliberin-1 (both maturation and degradation) hormones. Degradation of hemoregulatory peptide N-acetyl-SDKP (AcSDKP) and amyloid-beta proteins is mediated by the N-terminal catalytic domain, while angiotensin I and cholecystokinin cleavage is mediated by the C-terminal catalytic region. Its function is as follows. Soluble form that is released in blood plasma and other body fluids following proteolytic cleavage in the juxtamembrane stalk region. Functionally, isoform produced by alternative promoter usage that is specifically expressed in spermatocytes and adult testis, and which is required for male fertility. In contrast to somatic isoforms, only contains one catalytic domain. Acts as a dipeptidyl carboxypeptidase that removes dipeptides from the C-terminus of substrates. The identity of substrates that are needed for male fertility is unknown. May also have a glycosidase activity which releases GPI-anchored proteins from the membrane by cleaving the mannose linkage in the GPI moiety. The GPIase activity was reported to be essential for the egg-binding ability of the sperm. This activity is however unclear and has been challenged by other groups, suggesting that it may be indirect. This chain is Angiotensin-converting enzyme, found in Oryctolagus cuniculus (Rabbit).